A 328-amino-acid chain; its full sequence is L-lactate dehydrogenase (328 aa).

NAD(+)-binding positions include V18, E39, K46, Y71, and 85 to 86 (GA). Residues Q88 and R94 each contribute to the substrate site. NAD(+) contacts are provided by residues S107, 124-126 (AAN), and S149. 126–129 (NPVD) is a substrate binding site. 154 to 157 (DSAR) serves as a coordination point for substrate. Residues R159 and H174 each coordinate beta-D-fructose 1,6-bisphosphate. H181 serves as the catalytic Proton acceptor. Residue Y226 is modified to Phosphotyrosine. Residue T235 participates in substrate binding.

The protein belongs to the LDH/MDH superfamily. LDH family. As to quaternary structure, homotetramer.

Its subcellular location is the cytoplasm. The catalysed reaction is (S)-lactate + NAD(+) = pyruvate + NADH + H(+). It functions in the pathway fermentation; pyruvate fermentation to lactate; (S)-lactate from pyruvate: step 1/1. Its activity is regulated as follows. Allosterically activated by fructose 1,6-bisphosphate (FBP). Catalyzes the conversion of lactate to pyruvate. The sequence is that of L-lactate dehydrogenase from Streptococcus pneumoniae (strain ATCC BAA-255 / R6).